Reading from the N-terminus, the 967-residue chain is Vacuolar membrane protease (967 aa).

Over 1 to 16 (MARPSLSRSNPLGFTP) the chain is Cytoplasmic. A helical transmembrane segment spans residues 17 to 37 (WPVTVITAVVYLALVVPLLVV). Over 38–387 (HHVVPSAPSS…SAFVVFELHT (350 aa)) the chain is Vacuolar. Asn53 and Asn119 each carry an N-linked (GlcNAc...) asparagine glycan. The Zn(2+) site is built by His171 and Asp183. Glu217 serves as the catalytic Proton acceptor. Zn(2+)-binding residues include Glu218, Glu243, and His316. Residues 388-408 (LFALSVTLLVVAPLVLLVTSI) form a helical membrane-spanning segment. At 409–441 (ALNRADKMYLFRASASPEDSDGSEAVLLHGVRG) the chain is on the cytoplasmic side. Residues 442 to 462 (FFRFPFLLVIPTAVTVGLAYL) form a helical membrane-spanning segment. Residues 463-472 (VTKFNPYIIH) are Vacuolar-facing. Residues 473–493 (SSEYAVWSMMISAWVFLAWFV) form a helical membrane-spanning segment. The Cytoplasmic portion of the chain corresponds to 494–507 (SRVADFARPSAFHR). Residues 508 to 528 (VYTLTWLFLVEWVLLVISTVY) form a helical membrane-spanning segment. Over 529-532 (ENKY) the chain is Vacuolar. The helical transmembrane segment at 533-553 (GLAGGYFVFFAFAGTFLATWI) threads the bilayer. Residues 554 to 663 (SYLELFALPR…WSIHLPKWVW (110 aa)) are Cytoplasmic-facing. Residues 579–612 (SSHGSRLGTASGEDVEDGEDEDEDDDGTTAEATE) form a disordered region. Over residues 591 to 606 (EDVEDGEDEDEDDDGT) the composition is skewed to acidic residues. Residues 664-684 (VLQFLLTAPLVLTFVGPLALL) form a helical membrane-spanning segment. Residues 685-700 (LTSALRQTGQDGSSSL) are Vacuolar-facing. Residues 701–721 (FIYIAVAALTTLLFIPLLPFI) form a helical membrane-spanning segment. Residues 722 to 727 (HRYTHH) lie on the Cytoplasmic side of the membrane. Residues 728–748 (IPLFLLCVFAGTLIYNLVAFP) form a helical membrane-spanning segment. Residues 749 to 967 (FSPANRLKLF…LVEGSRRFEI (219 aa)) are Vacuolar-facing. Asn795 and Asn832 each carry an N-linked (GlcNAc...) asparagine glycan.

Belongs to the peptidase M28 family. Zn(2+) is required as a cofactor.

It is found in the vacuole membrane. In terms of biological role, may be involved in vacuolar sorting and osmoregulation. The sequence is that of Vacuolar membrane protease from Neosartorya fischeri (strain ATCC 1020 / DSM 3700 / CBS 544.65 / FGSC A1164 / JCM 1740 / NRRL 181 / WB 181) (Aspergillus fischerianus).